Reading from the N-terminus, the 119-residue chain is Large ribosomal subunit protein bL12 (119 aa).

This sequence belongs to the bacterial ribosomal protein bL12 family. In terms of assembly, homodimer. Part of the ribosomal stalk of the 50S ribosomal subunit. Forms a multimeric L10(L12)X complex, where L10 forms an elongated spine to which 2 to 4 L12 dimers bind in a sequential fashion. Binds GTP-bound translation factors.

Functionally, forms part of the ribosomal stalk which helps the ribosome interact with GTP-bound translation factors. Is thus essential for accurate translation. In Bacillus cytotoxicus (strain DSM 22905 / CIP 110041 / 391-98 / NVH 391-98), this protein is Large ribosomal subunit protein bL12.